Consider the following 178-residue polypeptide: Ribosome maturation factor RimP (178 aa).

It belongs to the RimP family.

It is found in the cytoplasm. In terms of biological role, required for maturation of 30S ribosomal subunits. The chain is Ribosome maturation factor RimP from Streptococcus pyogenes serotype M4 (strain MGAS10750).